A 220-amino-acid chain; its full sequence is Redox-sensing transcriptional repressor Rex (220 aa).

A DNA-binding region (H-T-H motif) is located at residues 25-64; that stretch reads WYLSNVKLLKQKGERYVSSTQISKEINIDASQIAKDLSYV. 99-104 provides a ligand contact to NAD(+); the sequence is GVGSLG.

It belongs to the transcriptional regulatory Rex family. As to quaternary structure, homodimer.

Its subcellular location is the cytoplasm. Its function is as follows. Modulates transcription in response to changes in cellular NADH/NAD(+) redox state. The chain is Redox-sensing transcriptional repressor Rex from Bacteroides fragilis (strain ATCC 25285 / DSM 2151 / CCUG 4856 / JCM 11019 / LMG 10263 / NCTC 9343 / Onslow / VPI 2553 / EN-2).